The following is a 348-amino-acid chain: Dihydroorotase (348 aa).

2 residues coordinate Zn(2+): histidine 17 and histidine 19. Substrate-binding positions include 19-21 and asparagine 45; that span reads HLR. Positions 103, 140, and 178 each coordinate Zn(2+). Lysine 103 carries the N6-carboxylysine modification. Histidine 140 lines the substrate pocket. Leucine 223 provides a ligand contact to substrate. Position 251 (aspartate 251) interacts with Zn(2+). Residue aspartate 251 is part of the active site. Residues histidine 255 and alanine 267 each coordinate substrate.

The protein belongs to the metallo-dependent hydrolases superfamily. DHOase family. Class II DHOase subfamily. As to quaternary structure, homodimer. Requires Zn(2+) as cofactor.

It catalyses the reaction (S)-dihydroorotate + H2O = N-carbamoyl-L-aspartate + H(+). Its pathway is pyrimidine metabolism; UMP biosynthesis via de novo pathway; (S)-dihydroorotate from bicarbonate: step 3/3. In terms of biological role, catalyzes the reversible cyclization of carbamoyl aspartate to dihydroorotate. This Salmonella arizonae (strain ATCC BAA-731 / CDC346-86 / RSK2980) protein is Dihydroorotase.